The chain runs to 194 residues: Large ribosomal subunit protein eL15 (194 aa).

The tract at residues 168–194 (RSRGLLNKGKGAEKVRPSIRAHQGKGK) is disordered. Positions 184 to 194 (PSIRAHQGKGK) are enriched in basic residues.

It belongs to the eukaryotic ribosomal protein eL15 family. In terms of assembly, part of the 50S ribosomal subunit.

The chain is Large ribosomal subunit protein eL15 from Thermococcus kodakarensis (strain ATCC BAA-918 / JCM 12380 / KOD1) (Pyrococcus kodakaraensis (strain KOD1)).